A 447-amino-acid chain; its full sequence is Keratin, type I cytoskeletal 15 (447 aa).

A head region spans residues methionine 1 to asparagine 93. Phosphoserine occurs at positions 16, 28, 33, and 47. The tract at residues glutamate 94–tryptophan 129 is coil 1A. In terms of domain architecture, IF rod spans glutamate 94–methionine 406. At threonine 120 the chain carries Phosphothreonine. The linker 1 stretch occupies residues tyrosine 130–threonine 148. Residues methionine 149–phenylalanine 240 are coil 1B. Positions serine 241 to leucine 260 are linker 12. Residues threonine 261–glutamine 402 form a coil 2 region. Lysine 289 is covalently cross-linked (Glycyl lysine isopeptide (Lys-Gly) (interchain with G-Cter in SUMO2)). 2 positions are modified to phosphothreonine: threonine 290 and threonine 312. A tail region spans residues aspartate 403–serine 447. Residue lysine 438 forms a Glycyl lysine isopeptide (Lys-Gly) (interchain with G-Cter in SUMO1); alternate linkage. A Glycyl lysine isopeptide (Lys-Gly) (interchain with G-Cter in SUMO2); alternate cross-link involves residue lysine 438.

It belongs to the intermediate filament family. In terms of assembly, heterotetramer of two type I and two type II keratins. Forms a heterodimer with KRT14. Interacts with NOD2.

This chain is Keratin, type I cytoskeletal 15, found in Rattus norvegicus (Rat).